The sequence spans 159 residues: Ribosomal RNA large subunit methyltransferase H (159 aa).

S-adenosyl-L-methionine is bound by residues L76, G108, and 127–132; that span reads FSKMTF.

The protein belongs to the RNA methyltransferase RlmH family. As to quaternary structure, homodimer.

Its subcellular location is the cytoplasm. The enzyme catalyses pseudouridine(1915) in 23S rRNA + S-adenosyl-L-methionine = N(3)-methylpseudouridine(1915) in 23S rRNA + S-adenosyl-L-homocysteine + H(+). Its function is as follows. Specifically methylates the pseudouridine at position 1915 (m3Psi1915) in 23S rRNA. This is Ribosomal RNA large subunit methyltransferase H from Lachnoclostridium phytofermentans (strain ATCC 700394 / DSM 18823 / ISDg) (Clostridium phytofermentans).